Here is a 249-residue protein sequence, read N- to C-terminus: NH(3)-dependent NAD(+) synthetase (249 aa).

Mg(2+) is bound at residue Asp-34. Residue Arg-110 coordinates deamido-NAD(+). Position 130 (Thr-130) interacts with ATP. Mg(2+) is bound at residue Glu-135. Deamido-NAD(+) is bound by residues Lys-143 and Asp-150. 2 residues coordinate ATP: Lys-159 and Ser-181. 232–233 (HK) contacts deamido-NAD(+).

The protein belongs to the NAD synthetase family. In terms of assembly, homodimer.

The catalysed reaction is deamido-NAD(+) + NH4(+) + ATP = AMP + diphosphate + NAD(+) + H(+). The protein operates within cofactor biosynthesis; NAD(+) biosynthesis; NAD(+) from deamido-NAD(+) (ammonia route): step 1/1. In terms of biological role, catalyzes the ATP-dependent amidation of deamido-NAD to form NAD. Uses ammonia as a nitrogen source. This is NH(3)-dependent NAD(+) synthetase from Picrophilus torridus (strain ATCC 700027 / DSM 9790 / JCM 10055 / NBRC 100828 / KAW 2/3).